The primary structure comprises 136 residues: Translation initiation factor 5A (136 aa).

Lysine 37 carries the hypusine modification.

It belongs to the eIF-5A family.

The protein resides in the cytoplasm. Functions by promoting the formation of the first peptide bond. The chain is Translation initiation factor 5A (eIF5A) from Thermococcus gammatolerans (strain DSM 15229 / JCM 11827 / EJ3).